The chain runs to 89 residues: Elongation factor 1-beta (89 aa).

The protein belongs to the EF-1-beta/EF-1-delta family.

Promotes the exchange of GDP for GTP in EF-1-alpha/GDP, thus allowing the regeneration of EF-1-alpha/GTP that could then be used to form the ternary complex EF-1-alpha/GTP/AAtRNA. The protein is Elongation factor 1-beta of Methanosarcina acetivorans (strain ATCC 35395 / DSM 2834 / JCM 12185 / C2A).